The chain runs to 248 residues: Phosphate import ATP-binding protein PstB (248 aa).

The ABC transporter domain maps to 1–243 (MAVNDVNVFY…PQHNLTQGYI (243 aa)). 33–40 (GPSGCGKS) contributes to the ATP binding site.

Belongs to the ABC transporter superfamily. Phosphate importer (TC 3.A.1.7) family. As to quaternary structure, the complex is composed of two ATP-binding proteins (PstB), two transmembrane proteins (PstC and PstA) and a solute-binding protein (PstS).

It localises to the cell inner membrane. It catalyses the reaction phosphate(out) + ATP + H2O = ADP + 2 phosphate(in) + H(+). In terms of biological role, part of the ABC transporter complex PstSACB involved in phosphate import. Responsible for energy coupling to the transport system. This Rhodospirillum rubrum (strain ATCC 11170 / ATH 1.1.1 / DSM 467 / LMG 4362 / NCIMB 8255 / S1) protein is Phosphate import ATP-binding protein PstB.